The following is a 390-amino-acid chain: Trehalose-phosphate phosphatase (390 aa).

Catalysis depends on Asp-150, which acts as the Nucleophile. The Mg(2+) site is built by Asp-150, Asp-152, and Asp-333. 150-152 (DFD) contacts substrate.

Belongs to the trehalose phosphatase family. It depends on Mg(2+) as a cofactor.

The catalysed reaction is alpha,alpha-trehalose 6-phosphate + H2O = alpha,alpha-trehalose + phosphate. It functions in the pathway glycan biosynthesis; trehalose biosynthesis. Removes the phosphate from trehalose 6-phosphate to produce free trehalose. The chain is Trehalose-phosphate phosphatase (otsB) from Mycobacterium marinum (strain ATCC BAA-535 / M).